The following is a 308-amino-acid chain: S-adenosylmethionine-dependent nucleotide dehydratase (308 aa).

The 247-residue stretch at 7–253 (SIQELVINFH…WQSYLMINPE (247 aa)) folds into the Radical SAM core domain. [4Fe-4S] cluster is bound by residues C21, C25, and C28.

Belongs to the radical SAM superfamily. Viperin family. The cofactor is [4Fe-4S] cluster.

It catalyses the reaction CTP + AH2 + S-adenosyl-L-methionine = 3'-deoxy-3',4'-didehydro-CTP + 5'-deoxyadenosine + L-methionine + A + H2O + H(+). The enzyme catalyses GTP + AH2 + S-adenosyl-L-methionine = 3'-deoxy-3',4'-didehydro-GTP + 5'-deoxyadenosine + L-methionine + A + H2O + H(+). It carries out the reaction UTP + AH2 + S-adenosyl-L-methionine = 3'-deoxy-3',4'-didehydro-UTP + 5'-deoxyadenosine + L-methionine + A + H2O + H(+). Its function is as follows. Expression of pVip58 in E.coli (strain MG1655) confers resistance to phages lambda, P1 and T7; delays culture collapse upon infection with T7. Catalyzes the conversion of cytidine triphosphate (CTP) to 3'-deoxy-3',4'-didehydro-CTP (ddhCTP), guanosine triphosphate (GTP) to 3'-deoxy-3',4'-didehydro-GTP (ddhGTP) and uridine triphosphate (UTP) to 3'-deoxy-3',4'-didehydro-UTP (ddhUTP), probably via a SAM-dependent radical mechanism. The modified nucleotide represses transcription from T7 RNA polymerase-directed genes (possibly by acting as chain terminators), strongly suggesting these nucleotides block viral polymerase transcription. This chain is S-adenosylmethionine-dependent nucleotide dehydratase, found in Pseudoalteromonas ulvae.